The following is a 415-amino-acid chain: Serine/threonine transporter SstT (415 aa).

8 helical membrane passes run 23–43 (ILVGLVLGILLAWLSKPAAIA), 47–67 (LGTLFVGALKAVAPVLVLMLV), 85–105 (ILWLYLLGTFSAALTAVLFSF), 144–164 (ALLKGNYIGILVWAVGLGFAL), 181–201 (AVTFMVKLVIRFAPIGIFGLV), 220–240 (LMVLIGCMFLVALVINPLIVF), 303–323 (GAAITITVLTLAAVHTLGIAV), and 333–353 (VVASLCACGASGVAGGSLLLI).

The protein belongs to the dicarboxylate/amino acid:cation symporter (DAACS) (TC 2.A.23) family.

The protein localises to the cell inner membrane. The catalysed reaction is L-serine(in) + Na(+)(in) = L-serine(out) + Na(+)(out). It carries out the reaction L-threonine(in) + Na(+)(in) = L-threonine(out) + Na(+)(out). In terms of biological role, involved in the import of serine and threonine into the cell, with the concomitant import of sodium (symport system). This chain is Serine/threonine transporter SstT, found in Cronobacter sakazakii (strain ATCC BAA-894) (Enterobacter sakazakii).